The primary structure comprises 300 residues: Fe(3+) dicitrate-binding periplasmic protein FecB (300 aa).

A signal peptide spans 1-21; that stretch reads MLAFIRFLFAGLLLVISHAFA. Residues 39–295 form the Fe/B12 periplasmic-binding domain; the sequence is RIVVLELSFA…DTVKIFHHQP (257 aa).

This sequence belongs to the bacterial solute-binding protein 8 family. As to quaternary structure, the complex is composed of two ATP-binding proteins (FecE), two transmembrane proteins (FecC and FecD) and a solute-binding protein (FecB). Interacts with FecC and FecD.

The protein localises to the periplasm. Functionally, part of the ABC transporter complex FecBCDE involved in citrate-dependent Fe(3+) uptake. Binds both iron-free and iron-loaded citrate although it binds iron-loaded citrate with a higher affinity. Binds different forms of Fe(3+)-citrate as well as citrate complexed with various representative Fe(3+)-mimics (Ga(3+), Al(3+), Sc(3+) and In(3+)) and a representative divalent metal ion (Mg(2+)). Can also bind various tricarboxylates in iron-free and iron-loaded form. The chain is Fe(3+) dicitrate-binding periplasmic protein FecB from Escherichia coli (strain K12).